Consider the following 244-residue polypeptide: 5-oxoprolinase subunit A (244 aa).

This sequence belongs to the LamB/PxpA family. In terms of assembly, forms a complex composed of PxpA, PxpB and PxpC.

The catalysed reaction is 5-oxo-L-proline + ATP + 2 H2O = L-glutamate + ADP + phosphate + H(+). Catalyzes the cleavage of 5-oxoproline to form L-glutamate coupled to the hydrolysis of ATP to ADP and inorganic phosphate. This Shigella flexneri serotype 5b (strain 8401) protein is 5-oxoprolinase subunit A.